The following is a 254-amino-acid chain: Alcohol dehydrogenase (254 aa).

10–33 (FVAGLGGIGLDTSREIVKSGPKNL) serves as a coordination point for NAD(+). Substrate is bound at residue Ser138. Tyr151 (proton acceptor) is an active-site residue.

The protein belongs to the short-chain dehydrogenases/reductases (SDR) family. In terms of assembly, homodimer.

It carries out the reaction a primary alcohol + NAD(+) = an aldehyde + NADH + H(+). The enzyme catalyses a secondary alcohol + NAD(+) = a ketone + NADH + H(+). The sequence is that of Alcohol dehydrogenase (Adh) from Drosophila mimica (Fruit fly).